Consider the following 215-residue polypeptide: Probable phosphoglycerate mutase GpmB (215 aa).

Substrate contacts are provided by residues 8–15 (RHGETQWN), 21–22 (QG), arginine 58, arginine 60, 82–85 (ELDM), 104–105 (RR), and 151–152 (GI). Catalysis depends on histidine 9, which acts as the Tele-phosphohistidine intermediate. The Proton donor/acceptor role is filled by glutamate 82.

It belongs to the phosphoglycerate mutase family. GpmB subfamily.

The catalysed reaction is (2R)-2-phosphoglycerate = (2R)-3-phosphoglycerate. The protein operates within carbohydrate degradation; glycolysis; pyruvate from D-glyceraldehyde 3-phosphate: step 3/5. This is Probable phosphoglycerate mutase GpmB from Klebsiella pneumoniae (strain 342).